Here is a 402-residue protein sequence, read N- to C-terminus: Putative cytochrome P450 123 (402 aa).

Cys350 lines the heme pocket.

This sequence belongs to the cytochrome P450 family. It depends on heme as a cofactor.

In Mycobacterium bovis (strain ATCC BAA-935 / AF2122/97), this protein is Putative cytochrome P450 123 (cyp123).